A 143-amino-acid chain; its full sequence is Transcriptional regulator MraZ (143 aa).

SpoVT-AbrB domains are found at residues 5–47 (TYTP…PKEE) and 76–119 (TDEQ…DKQA).

Belongs to the MraZ family. As to quaternary structure, forms oligomers.

It localises to the cytoplasm. The protein localises to the nucleoid. The sequence is that of Transcriptional regulator MraZ from Nocardia farcinica (strain IFM 10152).